Consider the following 524-residue polypeptide: Protein tweety homolog 3 (524 aa).

Over 1 to 42 the chain is Extracellular; the sequence is MAGVSYAAPWWVSLLHRLPHFDLRWEATSSQFRPEDADYQQA. Residues 43 to 63 form a helical membrane-spanning segment; sequence LLLLGATALACLALDLLFLLF. Over 64–86 the chain is Cytoplasmic; that stretch reads YSFWLCCRRRKTDEHLDADCCCT. A helical membrane pass occupies residues 87–107; that stretch reads AWCVIITTLVCSAGIAVGFYG. Residues 108–211 are Extracellular-facing; sequence NGETSDGIHR…VDLYDWYRWL (104 aa). Residues E110 and D113 each coordinate Ca(2+). N-linked (GlcNAc...) asparagine glycosylation is found at N126 and N144. Residues 212–232 form a helical membrane-spanning segment; that stretch reads GYLGLLLLDVIICLLVLVGLI. Topologically, residues 233 to 236 are cytoplasmic; that stretch reads RSSK. Residues 237 to 257 form a helical membrane-spanning segment; the sequence is GILVGVCLLGVLALVISWGAL. The Extracellular portion of the chain corresponds to 258-386; that stretch reads GLELAVSVGS…LTGFCYDGVE (129 aa). 2 cysteine pairs are disulfide-bonded: C271–C381 and C299–C366. N351 carries N-linked (GlcNAc...) asparagine glycosylation. Residues 387 to 407 form a helical membrane-spanning segment; the sequence is GLIYLALFSFVTALMFSSIVC. The Cytoplasmic portion of the chain corresponds to 408–524; sequence SIPHTWQQKR…PRPDSSGSGH (117 aa). Disordered stretches follow at residues 413-435 and 485-524; these read WQQK…RQAH and RCEN…GSGH. S496 carries the phosphoserine modification. Residues 498–501 carry the PY-motif; mediates interaction with NEDD4L motif; the sequence is PPSY. Polar residues predominate over residues 501–524; sequence YTSSMRAKYLATSQPRPDSSGSGH. A phosphoserine mark is found at S504 and S522.

The protein belongs to the tweety family. As to quaternary structure, homotetramer; disulfide-linked. Forms cis-homodimers in the presence of Ca(2+). Interacts with NEDD4L. Post-translationally, ubiquitinated by NEDD4L. N-glycosylated. As to expression, expressed in excitable tissues. Expressed in the brain, heart, skeletal muscle, colon, spleen, kidney and peripheral blood leukocytes. Also expressed in fat, the pancreas, thymus, and uterus.

It is found in the cell membrane. The catalysed reaction is chloride(in) = chloride(out). It carries out the reaction L-glutamate(out) = L-glutamate(in). With respect to regulation, inhibited by (4-[(2-butyl-6,7-dichloro-2- cyclopentyl-2,3-dihydro-1-oxo-1H-inden-5-yl)oxy]butanoic acid), genistein and PD98059 (MEK1 inhibitor). Its function is as follows. Calcium-independent, swelling-dependent volume-regulated anion channel (VRAC-swell) which plays a pivotal role in the process of regulatory volume decrease (RVD) in the brain through the efflux of anions like chloride and organic osmolytes like glutamate. Probable large-conductance Ca(2+)-activated chloride channel. The sequence is that of Protein tweety homolog 3 (Ttyh3) from Mus musculus (Mouse).